Reading from the N-terminus, the 227-residue chain is Ribonuclease HII (227 aa).

Residues 16–205 (SLLAGVDEVG…VKMALDAVGV (190 aa)) enclose the RNase H type-2 domain. Positions 22, 23, and 114 each coordinate a divalent metal cation.

Belongs to the RNase HII family. It depends on Mn(2+) as a cofactor. Mg(2+) is required as a cofactor.

The protein resides in the cytoplasm. The enzyme catalyses Endonucleolytic cleavage to 5'-phosphomonoester.. Its function is as follows. Endonuclease that specifically degrades the RNA of RNA-DNA hybrids. The sequence is that of Ribonuclease HII from Marinobacter nauticus (strain ATCC 700491 / DSM 11845 / VT8) (Marinobacter aquaeolei).